We begin with the raw amino-acid sequence, 306 residues long: MERLQRLMMNTKVGAADANKDDTKETVYISSIALLKMLKHGRAGVPMEVMGLMLGEFVDEYTVNVVDVFAMPQSGTGVSVEAVDDVFQARMMDMLKQTGRDQMVVGWYHSHPGFGCWLSSVDVNTQKSFEQLNNRAVAVVVDPIQSVKGKVVIDAFRLIDTGALINNQEPRQTTSNSGLMNKANIQALIHGLNRHYYSLNIDYHKTPAETKMLLNLHKEQWQSGLKMQDYQEKETENLEATKRMVAVAQQYSKRIEEEKELSEEELKTRYVGKQDPKKHLAKTAENTLEENTVSVLTAGVNSIAIK.

The MPN domain maps to 27–162; it reads VYISSIALLK…IDAFRLIDTG (136 aa). The Zn(2+) site is built by His-109, His-111, and Asp-122. Residues 109 to 122 carry the JAMM motif motif; sequence HSHPGFGCWLSSVD.

The protein belongs to the peptidase M67A family.

Functionally, acts as a regulatory subunit of the 26 proteasome which is involved in the ATP-dependent degradation of ubiquitinated proteins. This Candida glabrata (strain ATCC 2001 / BCRC 20586 / JCM 3761 / NBRC 0622 / NRRL Y-65 / CBS 138) (Yeast) protein is 26S proteasome regulatory subunit RPN11 (RPN11).